The following is a 216-amino-acid chain: Cytidylate kinase (216 aa).

ATP is bound at residue 11–19; it reads GPAGAGKGT.

This sequence belongs to the cytidylate kinase family. Type 1 subfamily.

It is found in the cytoplasm. The catalysed reaction is CMP + ATP = CDP + ADP. It catalyses the reaction dCMP + ATP = dCDP + ADP. This is Cytidylate kinase from Mesorhizobium japonicum (strain LMG 29417 / CECT 9101 / MAFF 303099) (Mesorhizobium loti (strain MAFF 303099)).